The sequence spans 121 residues: Basic phospholipase A2 homolog piratoxin-2 (121 aa).

7 disulfide bridges follow: cysteine 26–cysteine 115, cysteine 28–cysteine 44, cysteine 43–cysteine 95, cysteine 49–cysteine 121, cysteine 50–cysteine 88, cysteine 57–cysteine 81, and cysteine 75–cysteine 86. The tract at residues 105–117 (KKYRYHLKPFCKK) is important for membrane-damaging activities in eukaryotes and bacteria; heparin-binding.

It belongs to the phospholipase A2 family. Group II subfamily. K49 sub-subfamily. As to quaternary structure, homodimer; non-covalently linked. Expressed by the venom gland.

It localises to the secreted. Functionally, snake venom phospholipase A2 (PLA2) homolog that lacks enzymatic activity. Shows myotoxic activity and edema-inducing activities in vivo. A model of myotoxic mechanism has been proposed: an apo Lys49-PLA2 is activated by the entrance of a hydrophobic molecule (e.g. fatty acid) at the hydrophobic channel of the protein leading to a reorientation of a monomer. This reorientation causes a transition between 'inactive' to 'active' states, causing alignment of C-terminal and membrane-docking sites (MDoS) side-by-side and putting the membrane-disruption sites (MDiS) in the same plane, exposed to solvent and in a symmetric position for both monomers. The MDoS region stabilizes the toxin on membrane by the interaction of charged residues with phospholipid head groups. Subsequently, the MDiS region destabilizes the membrane with penetration of hydrophobic residues. This insertion causes a disorganization of the membrane, allowing an uncontrolled influx of ions (i.e. calcium and sodium), and eventually triggering irreversible intracellular alterations and cell death. The sequence is that of Basic phospholipase A2 homolog piratoxin-2 from Bothrops pirajai (Piraja's lancehead).